The chain runs to 475 residues: Adenylyl cyclase-associated protein 1 (475 aa).

An N-acetylalanine modification is found at Ala2. The residue at position 31 (Tyr31) is a Phosphotyrosine. Ser34 bears the Phosphoserine mark. Lys81 bears the N6-acetyllysine mark. 2 disordered regions span residues 216–255 and 278–318; these read ELSG…ASRS and MKTH…TKKE. The segment covering 218–228 has biased composition (low complexity); that stretch reads SGLPSGPSAGS. The segment covering 229–242 has biased composition (pro residues); that stretch reads GPPPPPPGPPPPPV. Low complexity predominate over residues 243 to 255; the sequence is STSSGSDESASRS. Lys287 carries the N6-methyllysine modification. Residues Ser290, Ser295, and Ser301 each carry the phosphoserine modification. At Thr307 the chain carries Phosphothreonine. Ser308 and Ser310 each carry phosphoserine. The 141-residue stretch at 313-453 folds into the C-CAP/cofactor C-like domain; that stretch reads PATKKEPAVL…EGGDFNEFPV (141 aa). Lys348 is covalently cross-linked (Glycyl lysine isopeptide (Lys-Gly) (interchain with G-Cter in SUMO1)).

This sequence belongs to the CAP family. As to quaternary structure, homodimer. Binds actin monomers.

It localises to the cell membrane. Functionally, directly regulates filament dynamics and has been implicated in a number of complex developmental and morphological processes, including mRNA localization and the establishment of cell polarity. The protein is Adenylyl cyclase-associated protein 1 (CAP1) of Pongo abelii (Sumatran orangutan).